A 166-amino-acid chain; its full sequence is Small ribosomal subunit protein uS5 (166 aa).

Residues 12 to 75 (YIEKLVQVNR…EAARRNMIQV (64 aa)) form the S5 DRBM domain.

The protein belongs to the universal ribosomal protein uS5 family. In terms of assembly, part of the 30S ribosomal subunit. Contacts proteins S4 and S8.

In terms of biological role, with S4 and S12 plays an important role in translational accuracy. Located at the back of the 30S subunit body where it stabilizes the conformation of the head with respect to the body. The protein is Small ribosomal subunit protein uS5 of Pseudomonas fluorescens (strain SBW25).